A 3619-amino-acid chain; its full sequence is BEACH domain-containing protein lvsA (3619 aa).

Disordered regions lie at residues 1-117 (MFRR…NNNN), 648-709 (KIDD…EKEA), 1101-1129 (NNNN…NNDQ), 1367-1390 (SPNL…NSKK), 1636-1658 (IPTP…RKSI), 1893-1924 (SSIS…PTSG), and 1964-1999 (QQAA…NTPN). Residues 17 to 30 (PQVPHSPGHPPHQP) are compositionally biased toward pro residues. Low complexity-rich tracts occupy residues 31 to 59 (PQQQ…QQPQ), 68 to 87 (SVSS…SFSS), 97 to 117 (EESS…NNNN), 656 to 689 (NNNN…NEEN), 1101 to 1127 (NNNN…NNNN), 1375 to 1387 (NNNN…GGSN), 1640 to 1652 (SSSS…SSTS), and 1893 to 1923 (SSIS…TPTS). The WD 1 repeat unit spans residues 94–133 (SATEESSSINSNNNNNNNKNNNNNNNSNIIESNINVWTIM). Residues 1974-1986 (MSIQSSPFQSKNL) are compositionally biased toward polar residues. A coiled-coil region spans residues 2234-2258 (VKILEKLEADRVGLQKTVQSLYKSL). Residues 2294–2335 (LDSDFMNAFCYPLYKLVISDQHEHVDNSIKLWRLLLSLKTSS) form a WD 2 repeat. Disordered regions lie at residues 2403-2457 (KKQH…ITKK) and 2596-2785 (NTSS…SEDE). The segment covering 2440–2452 (DRKDQSHQEEKSK) has biased composition (basic and acidic residues). Residues 2596 to 2662 (NTSSITNNNN…TTTPQQSSSQ (67 aa)) show a composition bias toward low complexity. Polar residues-rich tracts occupy residues 2663–2687 (IKVS…SSSE) and 2694–2725 (KLQS…SEEN). 2 stretches are compositionally biased toward low complexity: residues 2726 to 2735 (SSLTSASTTL) and 2742 to 2764 (TQTT…TTTT). Positions 2807–2932 (KDPRLNGIMY…TRDEVYHTLV (126 aa)) constitute a BEACH-type PH domain. The tract at residues 2940–2971 (TIGGDAQGITGGQTGNDDNDDHHGGGGGRGVR) is disordered. Gly residues predominate over residues 2944–2953 (DAQGITGGQT). Over residues 2959 to 2971 (DDHHGGGGGRGVR) the composition is skewed to basic and acidic residues. The region spanning 2972–3270 (DRFTSIWRKS…QLFDKPHPKR (299 aa)) is the BEACH domain. 5 WD repeats span residues 3347–3386 (HHDG…LAKR), 3389–3428 (GHTG…YVRS), 3431–3471 (AHEG…NYKT), 3474–3518 (IAND…LPDN), and 3563–3602 (SHST…QVKQ). A disordered region spans residues 3516–3539 (PDNNNSNNNNNNNNNNNNNATQIP). The segment covering 3518 to 3534 (NNNSNNNNNNNNNNNNN) has biased composition (low complexity).

Its subcellular location is the contractile vacuole membrane. Functionally, involved in myosin-independent cytokinesis and early steps of phagocytosis. Also involved in contractile vacuole-mediated osmoregulation. In Dictyostelium discoideum (Social amoeba), this protein is BEACH domain-containing protein lvsA (lvsA).